The primary structure comprises 597 residues: MKKEIKRDDVNVIEKDFGNNNSIILKLFKKFGEDSFFIQTTVTDIIVLWIDGSLLLALAKFLLTINNPYNMLFDLYGIDERMRLYKHNLPLSHFSVVYHFISINRNSDIILKIALLEEKLSLPTLTKLYPNANWYEREIWDMFGISFENHPNLIRILMPKTWVGHPLRKDHPARATEFDPYVLNKYKEDIEMEALKFKPEEWGMKKNKQSKYMFLNLGPNHPSAHGAFRIILQLDGEEIVDCVPDIGYHHRGAEKMGERQTWHNYIPYTDRVEYLGGCINEMPYVLAVERLAGIEVSQRIEVIRIMLSELFRINSHLLFISTFIQDVGAMTPVFLAFTDRQKIYDLIELITGSRMHPAWFRIGGLAHDLPKGWNALLKEFLLWMPKRLLKYINVALKNSILISRSKGIAEYNKHDALLWGVTGAGLRATGINFDVRKKRPYSGYQNFDFEVPIGAGISDCYSRVMLKLEEIWQSLAILKQCLENMPEGPFKMDHPNTTPPHKVRTLQHIETMISHFLKVSWGPVLSSNESFKMVEATKGINSYYLISDGNTMSYRTRIRTPSFPHLQQIPSVIRGNLISDLIAYLGSIDFVMSDVDR.

The interval Met1 to Glu188 is NADH dehydrogenase I subunit C. The segment at Lys211 to Arg597 is NADH dehydrogenase I subunit D.

It in the N-terminal section; belongs to the complex I 30 kDa subunit family. In the C-terminal section; belongs to the complex I 49 kDa subunit family. As to quaternary structure, NDH-1 is composed of 13 different subunits. Subunits NuoB, CD, E, F, and G constitute the peripheral sector of the complex.

The protein resides in the cell inner membrane. The catalysed reaction is a quinone + NADH + 5 H(+)(in) = a quinol + NAD(+) + 4 H(+)(out). Functionally, NDH-1 shuttles electrons from NADH, via FMN and iron-sulfur (Fe-S) centers, to quinones in the respiratory chain. The immediate electron acceptor for the enzyme in this species is believed to be ubiquinone. Couples the redox reaction to proton translocation (for every two electrons transferred, four hydrogen ions are translocated across the cytoplasmic membrane), and thus conserves the redox energy in a proton gradient. This Buchnera aphidicola subsp. Baizongia pistaciae (strain Bp) protein is NADH-quinone oxidoreductase subunit C/D.